Here is a 201-residue protein sequence, read N- to C-terminus: Recombination protein RecR (201 aa).

Residues 59–74 (CKICGNIDTENICRIC) form a C4-type zinc finger. A Toprim domain is found at 82-177 (SIIAIVETVA…KISRLASGIP (96 aa)).

This sequence belongs to the RecR family.

May play a role in DNA repair. It seems to be involved in an RecBC-independent recombinational process of DNA repair. It may act with RecF and RecO. This Rickettsia massiliae (strain Mtu5) protein is Recombination protein RecR.